A 48-amino-acid polypeptide reads, in one-letter code: Large ribosomal subunit protein bL33A (48 aa).

It belongs to the bacterial ribosomal protein bL33 family.

The chain is Large ribosomal subunit protein bL33A from Limosilactobacillus fermentum (strain NBRC 3956 / LMG 18251) (Lactobacillus fermentum).